The primary structure comprises 107 residues: uncharacterized protein (107 aa).

One can recognise an HTH cro/C1-type domain in the interval 13–68 (LQEEFLEPLSLKISDLAQILDVHRNTASNIVNNSSRITLEMAVKLAKVFDTTPEFW). The H-T-H motif DNA-binding region spans 24–43 (KISDLAQILDVHRNTASNIV).

It belongs to the VapA/VapI family.

This is an uncharacterized protein from Haemophilus influenzae (strain ATCC 51907 / DSM 11121 / KW20 / Rd).